Consider the following 163-residue polypeptide: Large ribosomal subunit protein uL11 (163 aa).

This sequence belongs to the universal ribosomal protein uL11 family. Part of the ribosomal stalk of the 50S ribosomal subunit. Interacts with L10 and the large rRNA to form the base of the stalk. L10 forms an elongated spine to which L12 dimers bind in a sequential fashion forming a multimeric L10(L12)X complex.

In terms of biological role, forms part of the ribosomal stalk which helps the ribosome interact with GTP-bound translation factors. The polypeptide is Large ribosomal subunit protein uL11 (Thermococcus onnurineus (strain NA1)).